The chain runs to 199 residues: Recombination protein RecR (199 aa).

The C4-type zinc finger occupies Cys58 to Cys73. A Toprim domain is found at Ala81 to Pro176.

This sequence belongs to the RecR family.

Functionally, may play a role in DNA repair. It seems to be involved in an RecBC-independent recombinational process of DNA repair. It may act with RecF and RecO. This chain is Recombination protein RecR, found in Bradyrhizobium sp. (strain BTAi1 / ATCC BAA-1182).